A 307-amino-acid polypeptide reads, in one-letter code: Ornithine carbamoyltransferase (307 aa).

Residues 53 to 56 (STRT), Gln-80, Arg-104, and 131 to 134 (HPCQ) each bind carbamoyl phosphate. L-ornithine is bound by residues Asn-162, Asp-220, and 224 to 225 (SM). Carbamoyl phosphate-binding positions include 260–261 (CL) and Arg-288.

It belongs to the aspartate/ornithine carbamoyltransferase superfamily. OTCase family.

It is found in the cytoplasm. It catalyses the reaction carbamoyl phosphate + L-ornithine = L-citrulline + phosphate + H(+). Its pathway is amino-acid biosynthesis; L-arginine biosynthesis; L-arginine from L-ornithine and carbamoyl phosphate: step 1/3. Its function is as follows. Reversibly catalyzes the transfer of the carbamoyl group from carbamoyl phosphate (CP) to the N(epsilon) atom of ornithine (ORN) to produce L-citrulline. The protein is Ornithine carbamoyltransferase of Nitrosomonas eutropha (strain DSM 101675 / C91 / Nm57).